A 212-amino-acid polypeptide reads, in one-letter code: Ribosomal RNA large subunit methyltransferase E (212 aa).

The S-adenosyl-L-methionine site is built by G57, W59, D77, D93, and D122. K162 serves as the catalytic Proton acceptor.

It belongs to the class I-like SAM-binding methyltransferase superfamily. RNA methyltransferase RlmE family.

It localises to the cytoplasm. It carries out the reaction uridine(2552) in 23S rRNA + S-adenosyl-L-methionine = 2'-O-methyluridine(2552) in 23S rRNA + S-adenosyl-L-homocysteine + H(+). Its function is as follows. Specifically methylates the uridine in position 2552 of 23S rRNA at the 2'-O position of the ribose in the fully assembled 50S ribosomal subunit. The polypeptide is Ribosomal RNA large subunit methyltransferase E (Coxiella burnetii (strain CbuK_Q154) (Coxiella burnetii (strain Q154))).